A 218-amino-acid chain; its full sequence is Octanoyltransferase (218 aa).

A BPL/LPL catalytic domain is found at 32–214 (VLTADEIWLV…HFTQLLGYND (183 aa)). Residues 71–78 (RGGQITYH), 143–145 (SLG), and 156–158 (GLA) contribute to the substrate site. Residue cysteine 174 is the Acyl-thioester intermediate of the active site.

The protein belongs to the LipB family.

The protein resides in the cytoplasm. The enzyme catalyses octanoyl-[ACP] + L-lysyl-[protein] = N(6)-octanoyl-L-lysyl-[protein] + holo-[ACP] + H(+). It functions in the pathway protein modification; protein lipoylation via endogenous pathway; protein N(6)-(lipoyl)lysine from octanoyl-[acyl-carrier-protein]: step 1/2. Its function is as follows. Catalyzes the transfer of endogenously produced octanoic acid from octanoyl-acyl-carrier-protein onto the lipoyl domains of lipoate-dependent enzymes. Lipoyl-ACP can also act as a substrate although octanoyl-ACP is likely to be the physiological substrate. The polypeptide is Octanoyltransferase (Histophilus somni (strain 2336) (Haemophilus somnus)).